The chain runs to 63 residues: Large ribosomal subunit protein uL29 (63 aa).

Belongs to the universal ribosomal protein uL29 family.

The sequence is that of Large ribosomal subunit protein uL29 from Enterobacter sp. (strain 638).